Reading from the N-terminus, the 1402-residue chain is Baculoviral IAP repeat-containing protein 1g (1402 aa).

BIR repeat units lie at residues 60–127 (EAKR…CEFL), 159–227 (EEAR…CEFL), and 278–345 (EELR…CVFL). Residues Cys-315, Cys-318, His-335, and Cys-342 each coordinate Zn(2+). The NACHT domain occupies 464–759 (SVMCVEGEAG…EFLAAVRLTE (296 aa)). Lys-476 serves as a coordination point for ATP.

Its function is as follows. Prevents motor-neuron apoptosis induced by a variety of signals. In Mus musculus (Mouse), this protein is Baculoviral IAP repeat-containing protein 1g (Naip7).